A 121-amino-acid chain; its full sequence is Small ribosomal subunit protein uS13 (121 aa).

Positions 97–121 are disordered; that stretch reads VRGQRTRTNARTRRGARKTVAGKKK. The segment covering 100-121 has biased composition (basic residues); it reads QRTRTNARTRRGARKTVAGKKK.

It belongs to the universal ribosomal protein uS13 family. In terms of assembly, part of the 30S ribosomal subunit. Forms a loose heterodimer with protein S19. Forms two bridges to the 50S subunit in the 70S ribosome.

Its function is as follows. Located at the top of the head of the 30S subunit, it contacts several helices of the 16S rRNA. In the 70S ribosome it contacts the 23S rRNA (bridge B1a) and protein L5 of the 50S subunit (bridge B1b), connecting the 2 subunits; these bridges are implicated in subunit movement. Contacts the tRNAs in the A and P-sites. In Synechococcus sp. (strain CC9605), this protein is Small ribosomal subunit protein uS13.